The primary structure comprises 447 residues: UDP-N-acetylglucosamine 1-carboxyvinyltransferase (447 aa).

27–28 (KN) provides a ligand contact to phosphoenolpyruvate. Arg-97 is a binding site for UDP-N-acetyl-alpha-D-glucosamine. Catalysis depends on Cys-121, which acts as the Proton donor. At Cys-121 the chain carries 2-(S-cysteinyl)pyruvic acid O-phosphothioketal. UDP-N-acetyl-alpha-D-glucosamine is bound by residues 126–130 (RPVDL), Asp-314, and Val-336.

Belongs to the EPSP synthase family. MurA subfamily.

It is found in the cytoplasm. The catalysed reaction is phosphoenolpyruvate + UDP-N-acetyl-alpha-D-glucosamine = UDP-N-acetyl-3-O-(1-carboxyvinyl)-alpha-D-glucosamine + phosphate. It participates in cell wall biogenesis; peptidoglycan biosynthesis. Cell wall formation. Adds enolpyruvyl to UDP-N-acetylglucosamine. The protein is UDP-N-acetylglucosamine 1-carboxyvinyltransferase of Trichormus variabilis (strain ATCC 29413 / PCC 7937) (Anabaena variabilis).